The sequence spans 381 residues: Cytochrome b (381 aa).

4 helical membrane passes run 34 to 54, 78 to 99, 114 to 134, and 179 to 199; these read FGSL…FLAM, WLIR…YLHI, WNIG…GYVL, and FFAF…IHLL. Positions 84 and 98 each coordinate heme b. Heme b is bound by residues histidine 183 and histidine 197. Histidine 202 contributes to the a ubiquinone binding site. A run of 4 helical transmembrane segments spans residues 227 to 247, 289 to 309, 321 to 341, and 348 to 368; these read YKDI…TLFI, LGGV…PLLQ, MTQI…WIGG, and FIMV…IIIP.

The protein belongs to the cytochrome b family. In terms of assembly, the cytochrome bc1 complex contains 3 respiratory subunits (MT-CYB, CYC1 and UQCRFS1), 2 core proteins (UQCRC1 and UQCRC2) and probably 6 low-molecular weight proteins. Heme b is required as a cofactor.

It localises to the mitochondrion inner membrane. Functionally, component of the ubiquinol-cytochrome c reductase complex (complex III or cytochrome b-c1 complex) that is part of the mitochondrial respiratory chain. The b-c1 complex mediates electron transfer from ubiquinol to cytochrome c. Contributes to the generation of a proton gradient across the mitochondrial membrane that is then used for ATP synthesis. The protein is Cytochrome b (mt-cyb) of Galeocerdo cuvier (Tiger shark).